The sequence spans 401 residues: Acetate kinase (401 aa).

A Mg(2+)-binding site is contributed by N7. Position 14 (K14) interacts with ATP. R96 is a substrate binding site. D153 serves as the catalytic Proton donor/acceptor. Residues 212–216 (HLGNG), 287–289 (DMR), and 335–339 (GIGEN) each bind ATP. Residue E388 coordinates Mg(2+).

This sequence belongs to the acetokinase family. In terms of assembly, homodimer. It depends on Mg(2+) as a cofactor. Mn(2+) is required as a cofactor.

The protein resides in the cytoplasm. The enzyme catalyses acetate + ATP = acetyl phosphate + ADP. It participates in metabolic intermediate biosynthesis; acetyl-CoA biosynthesis; acetyl-CoA from acetate: step 1/2. Catalyzes the formation of acetyl phosphate from acetate and ATP. Can also catalyze the reverse reaction. This Microcystis aeruginosa (strain NIES-843 / IAM M-2473) protein is Acetate kinase.